The following is a 210-amino-acid chain: Large ribosomal subunit protein uL3 (210 aa).

The disordered stretch occupies residues 126–152 (HGFRGGPKTHGQSDRHRAPGSIGAGTT).

This sequence belongs to the universal ribosomal protein uL3 family. In terms of assembly, part of the 50S ribosomal subunit. Forms a cluster with proteins L14 and L19.

Functionally, one of the primary rRNA binding proteins, it binds directly near the 3'-end of the 23S rRNA, where it nucleates assembly of the 50S subunit. This Chloroflexus aurantiacus (strain ATCC 29366 / DSM 635 / J-10-fl) protein is Large ribosomal subunit protein uL3.